A 190-amino-acid chain; its full sequence is Pyridoxal 5'-phosphate synthase subunit PdxT (190 aa).

46–48 (GES) lines the L-glutamine pocket. The active-site Nucleophile is Cys78. Residues Arg105 and 133–134 (IR) each bind L-glutamine. Catalysis depends on charge relay system residues His169 and Glu171.

This sequence belongs to the glutaminase PdxT/SNO family. In terms of assembly, in the presence of PdxS, forms a dodecamer of heterodimers. Only shows activity in the heterodimer.

It catalyses the reaction aldehydo-D-ribose 5-phosphate + D-glyceraldehyde 3-phosphate + L-glutamine = pyridoxal 5'-phosphate + L-glutamate + phosphate + 3 H2O + H(+). It carries out the reaction L-glutamine + H2O = L-glutamate + NH4(+). It participates in cofactor biosynthesis; pyridoxal 5'-phosphate biosynthesis. In terms of biological role, catalyzes the hydrolysis of glutamine to glutamate and ammonia as part of the biosynthesis of pyridoxal 5'-phosphate. The resulting ammonia molecule is channeled to the active site of PdxS. In Niallia circulans (Bacillus circulans), this protein is Pyridoxal 5'-phosphate synthase subunit PdxT.